The sequence spans 393 residues: DNA primase small subunit PriS (393 aa).

Active-site residues include D100, D102, and D296.

Belongs to the eukaryotic-type primase small subunit family. As to quaternary structure, heterodimer of a small subunit (PriS) and a large subunit (PriL). Mg(2+) is required as a cofactor. Mn(2+) serves as cofactor.

Functionally, catalytic subunit of DNA primase, an RNA polymerase that catalyzes the synthesis of short RNA molecules used as primers for DNA polymerase during DNA replication. The small subunit contains the primase catalytic core and has DNA synthesis activity on its own. Binding to the large subunit stabilizes and modulates the activity, increasing the rate of DNA synthesis while decreasing the length of the DNA fragments, and conferring RNA synthesis capability. The DNA polymerase activity may enable DNA primase to also catalyze primer extension after primer synthesis. May also play a role in DNA repair. This chain is DNA primase small subunit PriS, found in Natronomonas pharaonis (strain ATCC 35678 / DSM 2160 / CIP 103997 / JCM 8858 / NBRC 14720 / NCIMB 2260 / Gabara) (Halobacterium pharaonis).